Reading from the N-terminus, the 1372-residue chain is DNA-directed RNA polymerase subunit beta (1372 aa).

It belongs to the RNA polymerase beta chain family. In terms of assembly, the RNAP catalytic core consists of 2 alpha, 1 beta, 1 beta' and 1 omega subunit. When a sigma factor is associated with the core the holoenzyme is formed, which can initiate transcription.

It catalyses the reaction RNA(n) + a ribonucleoside 5'-triphosphate = RNA(n+1) + diphosphate. In terms of biological role, DNA-dependent RNA polymerase catalyzes the transcription of DNA into RNA using the four ribonucleoside triphosphates as substrates. This is DNA-directed RNA polymerase subunit beta from Rickettsia bellii (strain RML369-C).